A 66-amino-acid polypeptide reads, in one-letter code: MAKKNASLLVKLVSSATKITSTGEEKSTGYFYVKKRNPKKLTRKLEFRKYDPVVRRHVLFKEEKLK.

The protein belongs to the bacterial ribosomal protein bL33 family.

This Wolbachia sp. subsp. Brugia malayi (strain TRS) protein is Large ribosomal subunit protein bL33.